A 165-amino-acid chain; its full sequence is Austinoid biosynthesis cluster protein J (165 aa).

Belongs to the trt14 isomerase family. In terms of assembly, homodimer.

It participates in secondary metabolite biosynthesis; terpenoid biosynthesis. Its function is as follows. Part of the gene cluster that mediates the biosynthesis of calidodehydroaustin, a fungal meroterpenoid. The first step of the pathway is the synthesis of 3,5-dimethylorsellinic acid by the polyketide synthase ausA. 3,5-dimethylorsellinic acid is then prenylated by the polyprenyl transferase ausN. Further epoxidation by the FAD-dependent monooxygenase ausM and cyclization by the probable terpene cyclase ausL lead to the formation of protoaustinoid A. Protoaustinoid A is then oxidized to spiro-lactone preaustinoid A3 by the combined action of the FAD-binding monooxygenases ausB and ausC, and the dioxygenase ausE. Acid-catalyzed keto-rearrangement and ring contraction of the tetraketide portion of preaustinoid A3 by ausJ lead to the formation of preaustinoid A4. The aldo-keto reductase ausK, with the help of ausH, is involved in the next step by transforming preaustinoid A4 into isoaustinone which is in turn hydroxylated by the P450 monooxygenase ausI to form austinolide. The cytochrome P450 monooxygenase ausG modifies austinolide to austinol. Austinol is further acetylated to austin by the O-acetyltransferase ausP, which spontaneously changes to dehydroaustin. The cytochrome P450 monooxygenase ausR then converts dehydroaustin is into 7-dehydrodehydroaustin. The hydroxylation catalyzed by ausR permits the O-acetyltransferase ausQ to add an additional acetyl group to the molecule, leading to the formation of acetoxydehydroaustin. The short chain dehydrogenase ausT catalyzes the reduction of the double bond present between carbon atoms 1 and 2 to convert 7-dehydrodehydroaustin into 1,2-dihydro-7-hydroxydehydroaustin. AusQ catalyzes not only an acetylation reaction but also the addition of the PKS ausV diketide product to 1,2-dihydro-7-hydroxydehydroaustin, forming precalidodehydroaustin. Finally, the iron/alpha-ketoglutarate-dependent dioxygenase converts precalidodehydroaustin into calidodehydroaustin. The polypeptide is Austinoid biosynthesis cluster protein J (Aspergillus calidoustus).